The chain runs to 534 residues: Ethanolamine kinase (534 aa).

Ser23 carries the post-translational modification Phosphoserine.

The protein belongs to the choline/ethanolamine kinase family.

It localises to the cytoplasm. The catalysed reaction is ethanolamine + ATP = phosphoethanolamine + ADP + H(+). The enzyme catalyses choline + ATP = phosphocholine + ADP + H(+). It participates in phospholipid metabolism; phosphatidylethanolamine biosynthesis; phosphatidylethanolamine from ethanolamine: step 1/3. Catalyzes the committed step of phosphatidylethanolamine synthesis via the CDP-ethanolamine branch of the Kennedy pathway. Also exhibits choline kinase activity, thus contributing to phosphatidylcholine synthesis via the CDP-choline pathway, but its preferred substrate is ethanolamine. This is Ethanolamine kinase (EKI1) from Saccharomyces cerevisiae (strain ATCC 204508 / S288c) (Baker's yeast).